The sequence spans 246 residues: Aquaporin AqpM (246 aa).

Residues 1 to 11 (MVSLTKRCIAE) are Cytoplasmic-facing. Residues 12 to 32 (FIGTFFLVFFGAGAAAITLMI) form a helical membrane-spanning segment. At 33 to 45 (ASGGTAPNPFNIG) the chain is on the extracellular side. Residues 46–66 (IGLLGGLGDWVAIGLAFGFAI) traverse the membrane as a helical segment. At 67-69 (AAS) the chain is on the cytoplasmic side. Residues 70 to 90 (IYALGNISGCHINPAVTIGLW) form a helical membrane-spanning segment. An NPA 1 motif is present at residues 82–84 (NPA). The Extracellular portion of the chain corresponds to 91-103 (SVKKFPGRDVVPY). Residues 104-124 (IIAQLLGAAFASFIFLQCAGI) traverse the membrane as a helical segment. Residues 125–145 (TAATIGGLGATAPFPGIGYWQ) lie on the Cytoplasmic side of the membrane. Residues 146 to 166 (AMLAETVGTFLLMITIMGIAV) form a helical membrane-spanning segment. At 167–172 (DERAPK) the chain is on the extracellular side. A helical membrane pass occupies residues 173–193 (GFAGIIIGLTVAGIITTIGNI). Residues 194–217 (TGSSLNPARTFGPYLNDMVFAGTN) are Cytoplasmic-facing. The NPA 2 motif lies at 199 to 201 (NPA). The chain crosses the membrane as a helical span at residues 218–238 (LWNYFPIYVIGPVVGAVLAAL). The Extracellular portion of the chain corresponds to 239–246 (TYQYLTSE).

The protein belongs to the MIP/aquaporin (TC 1.A.8) family. In terms of assembly, homotetramer.

The protein resides in the cell membrane. In terms of biological role, channel that permits osmotically driven movement of water in both directions. It mediates rapid entry or exit of water in response to abrupt changes in osmolarity. Also exhibits a transient but reproducible increase in the initial glycerol flux. The polypeptide is Aquaporin AqpM (aqpM) (Methanothermobacter thermautotrophicus (strain ATCC 29096 / DSM 1053 / JCM 10044 / NBRC 100330 / Delta H) (Methanobacterium thermoautotrophicum)).